The chain runs to 414 residues: Esterase FrsA (414 aa).

Belongs to the FrsA family.

It catalyses the reaction a carboxylic ester + H2O = an alcohol + a carboxylate + H(+). Its function is as follows. Catalyzes the hydrolysis of esters. The polypeptide is Esterase FrsA (Citrobacter koseri (strain ATCC BAA-895 / CDC 4225-83 / SGSC4696)).